The primary structure comprises 314 residues: Polyamine aminopropyltransferase (314 aa).

The PABS domain maps to W13 to D249. Residue Q42 coordinates S-methyl-5'-thioadenosine. Residues H73 and E97 each coordinate spermidine. S-methyl-5'-thioadenosine is bound by residues D117 and D149–A150. Catalysis depends on D168, which acts as the Proton acceptor. P177 is a binding site for S-methyl-5'-thioadenosine.

Belongs to the spermidine/spermine synthase family. In terms of assembly, homodimer or homotetramer.

The protein resides in the cytoplasm. It carries out the reaction S-adenosyl 3-(methylsulfanyl)propylamine + putrescine = S-methyl-5'-thioadenosine + spermidine + H(+). The protein operates within amine and polyamine biosynthesis; spermidine biosynthesis; spermidine from putrescine: step 1/1. Functionally, catalyzes the irreversible transfer of a propylamine group from the amino donor S-adenosylmethioninamine (decarboxy-AdoMet) to putrescine (1,4-diaminobutane) to yield spermidine. The sequence is that of Polyamine aminopropyltransferase from Aeropyrum pernix (strain ATCC 700893 / DSM 11879 / JCM 9820 / NBRC 100138 / K1).